Consider the following 481-residue polypeptide: Pentatricopeptide repeat-containing protein At2g48000 (481 aa).

PPR repeat units follow at residues Thr147 to Pro181, Ser187 to Pro221, Asp222 to Pro256, Thr257 to His287, Glu292 to Lys324, Lys328 to Ile362, Thr364 to Met398, Ser399 to Arg433, and Ser434 to Phe469.

This sequence belongs to the PPR family. P subfamily.

The polypeptide is Pentatricopeptide repeat-containing protein At2g48000 (Arabidopsis thaliana (Mouse-ear cress)).